Consider the following 137-residue polypeptide: Peptide methionine sulfoxide reductase MsrB (137 aa).

The MsrB domain maps to 7-129 (AEELKKKLSE…NSASLAFSDE (123 aa)). Residues Cys-46, Cys-49, Cys-95, and Cys-98 each contribute to the Zn(2+) site. Catalysis depends on Cys-118, which acts as the Nucleophile.

It belongs to the MsrB Met sulfoxide reductase family. Zn(2+) is required as a cofactor.

The enzyme catalyses L-methionyl-[protein] + [thioredoxin]-disulfide + H2O = L-methionyl-(R)-S-oxide-[protein] + [thioredoxin]-dithiol. The polypeptide is Peptide methionine sulfoxide reductase MsrB (Salmonella dublin (strain CT_02021853)).